A 638-amino-acid polypeptide reads, in one-letter code: Threonine--tRNA ligase (638 aa).

The 63-residue stretch at 1–63 (MVMIQIELPD…TESGRLEIIT (63 aa)) folds into the TGS domain. Residues 245 to 536 (DHRRIGRELD…LIEHYAGNFP (292 aa)) form a catalytic region. Cys-337, His-388, and His-513 together coordinate Zn(2+).

This sequence belongs to the class-II aminoacyl-tRNA synthetase family. Homodimer. It depends on Zn(2+) as a cofactor.

The protein resides in the cytoplasm. It catalyses the reaction tRNA(Thr) + L-threonine + ATP = L-threonyl-tRNA(Thr) + AMP + diphosphate + H(+). In terms of biological role, catalyzes the attachment of threonine to tRNA(Thr) in a two-step reaction: L-threonine is first activated by ATP to form Thr-AMP and then transferred to the acceptor end of tRNA(Thr). Also edits incorrectly charged L-seryl-tRNA(Thr). This Syntrophotalea carbinolica (strain DSM 2380 / NBRC 103641 / GraBd1) (Pelobacter carbinolicus) protein is Threonine--tRNA ligase.